The chain runs to 187 residues: Hypoxanthine/guanine phosphoribosyltransferase (187 aa).

This sequence belongs to the purine/pyrimidine phosphoribosyltransferase family. Archaeal HPRT subfamily. Homodimer.

It localises to the cytoplasm. It carries out the reaction IMP + diphosphate = hypoxanthine + 5-phospho-alpha-D-ribose 1-diphosphate. It catalyses the reaction GMP + diphosphate = guanine + 5-phospho-alpha-D-ribose 1-diphosphate. It participates in purine metabolism; IMP biosynthesis via salvage pathway; IMP from hypoxanthine: step 1/1. Catalyzes a salvage reaction resulting in the formation of IMP that is energically less costly than de novo synthesis. This Methanococcus voltae (strain ATCC BAA-1334 / A3) protein is Hypoxanthine/guanine phosphoribosyltransferase.